Here is a 1088-residue protein sequence, read N- to C-terminus: Myocardin-related transcription factor B (1088 aa).

Glu-22 carries the post-translational modification Phosphoserine. Residues 40–65 (EVLQLRLQQRRTREQLVDQGIMPPLK) form an RPEL 1 repeat. Ser-66 is subject to Phosphoserine. RPEL repeat units follow at residues 84-109 (NFLKHKIRSRPDRSELVRMHILEETF) and 128-153 (DDLNEKIAQRPGPMELVEKNILPVDS). Disordered stretches follow at residues 165–310 (EDYP…NEPQ), 349–389 (KPLN…PSSL), 472–508 (AELPPTGTSNATRVENVHSPLPISPSPSEQSSLSTDD), and 528–553 (LSSSPLRMTNNEDSLSPTSSTLSNLE). The segment covering 197 to 213 (SAASPSEPKVSESPSPV) has biased composition (low complexity). Residues 214-226 (TTNTPAQFASVSP) show a composition bias toward polar residues. The segment covering 238–248 (ADQPPPRPAAP) has biased composition (pro residues). Over residues 272-287 (NPNDKHRSKKCKDPKP) the composition is skewed to basic and acidic residues. The segment covering 355 to 366 (NSNSGNSALNNA) has biased composition (low complexity). Phosphothreonine occurs at positions 367 and 370. The segment covering 367–378 (TPNTPRQNTSTP) has biased composition (polar residues). Residues 389–423 (LDDLKVSELKTELKLRGLPVSGTKPDLIERLKPYQ) enclose the SAP domain. A compositionally biased stretch (polar residues) spans 528–540 (LSSSPLRMTNNED). Phosphoserine is present on residues Ser-541 and Ser-543. Low complexity predominate over residues 541 to 550 (SLSPTSSTLS). Residues 545-601 (TSSTLSNLELDAAEKDRKLQEKEKQIEELKRKLEQEQKLVEVLKMQLEVEKRGQQQR) are a coiled coil. Residues 563–591 (LQEKEKQIEELKRKLEQEQKLVEVLKMQL) form a required for interaction with itself and with MRTFA region. Disordered regions lie at residues 595 to 655 (KRGQ…QPVS) and 829 to 886 (NAPL…STQA). Lys-628 participates in a covalent cross-link: Glycyl lysine isopeptide (Lys-Gly) (interchain with G-Cter in SUMO1). Residues 829–838 (NAPLPSLQNG) show a composition bias toward polar residues. A compositionally biased stretch (basic and acidic residues) spans 867 to 879 (KTKDPPRYEEAIK). Ser-921 carries the post-translational modification Phosphoserine.

Interacts with MRTFA and SRF. Post-translationally, O-glycosylated.

It localises to the nucleus. Its function is as follows. Acts as a transcriptional coactivator of serum response factor (SRF). Required for skeletal myogenic differentiation. This is Myocardin-related transcription factor B from Homo sapiens (Human).